The primary structure comprises 701 residues: Glycine--tRNA ligase beta subunit (701 aa).

The protein belongs to the class-II aminoacyl-tRNA synthetase family. As to quaternary structure, tetramer of two alpha and two beta subunits.

The protein localises to the cytoplasm. It carries out the reaction tRNA(Gly) + glycine + ATP = glycyl-tRNA(Gly) + AMP + diphosphate. This is Glycine--tRNA ligase beta subunit from Thiobacillus denitrificans (strain ATCC 25259 / T1).